Here is a 129-residue protein sequence, read N- to C-terminus: MALEYPEELKYLDSHEYLRVEGDTVVVGVTSYAVDQLGDIVFVSLPEEGDRINRGDSFGSIESVKAVEELYAPLSGTVLSVNTVAVEDPALIGSDPYGDGWLIKVRLADPADELGETMTAEEYRERVEG.

The Lipoyl-binding domain occupies 24–106; sequence TVVVGVTSYA…YGDGWLIKVR (83 aa). Lysine 65 bears the N6-lipoyllysine mark.

The protein belongs to the GcvH family. The glycine cleavage system is composed of four proteins: P, T, L and H. (R)-lipoate serves as cofactor.

Its function is as follows. The glycine cleavage system catalyzes the degradation of glycine. The H protein shuttles the methylamine group of glycine from the P protein to the T protein. This is Glycine cleavage system H protein from Gloeobacter violaceus (strain ATCC 29082 / PCC 7421).